The primary structure comprises 302 residues: tRNA dimethylallyltransferase (302 aa).

Position 7 to 14 (7 to 14) interacts with ATP; it reads GPTASGKS. 9-14 contacts substrate; it reads TASGKS. Interaction with substrate tRNA regions lie at residues 32–35 and 156–160; these read DSMQ and QRILR.

This sequence belongs to the IPP transferase family. In terms of assembly, monomer. The cofactor is Mg(2+).

The enzyme catalyses adenosine(37) in tRNA + dimethylallyl diphosphate = N(6)-dimethylallyladenosine(37) in tRNA + diphosphate. Its function is as follows. Catalyzes the transfer of a dimethylallyl group onto the adenine at position 37 in tRNAs that read codons beginning with uridine, leading to the formation of N6-(dimethylallyl)adenosine (i(6)A). The protein is tRNA dimethylallyltransferase of Beijerinckia indica subsp. indica (strain ATCC 9039 / DSM 1715 / NCIMB 8712).